A 1603-amino-acid polypeptide reads, in one-letter code: GATOR1 complex protein DEPDC5 (1603 aa).

3 disordered regions span residues 427 to 450 (GKKP…KESE), 484 to 527 (VRER…SSLG), and 696 to 720 (LSNS…VSTS). Residues 430–439 (PASEKAKNGR) are compositionally biased toward basic and acidic residues. The span at 494 to 508 (SASSCDVSSSPSLPS) shows a compositional bias: low complexity. A Phosphoserine modification is found at Ser505. Composition is skewed to polar residues over residues 518-527 (SQASDDSSLG) and 696-707 (LSNSGAGMNPRT). Ser1002 carries the phosphoserine; by PIM1 modification. Residues 1135–1153 (DRGNSQTFGNSQNIGEQGY) show a composition bias toward polar residues. The tract at residues 1135-1165 (DRGNSQTFGNSQNIGEQGYSSTNSSDSSSQQ) is disordered. The span at 1154–1165 (SSTNSSDSSSQQ) shows a compositional bias: low complexity. Residues 1187–1262 (PSTGVQLLSE…YGFYFYKIVT (76 aa)) form the DEP domain. The residue at position 1530 (Ser1530) is a Phosphoserine; by PKB/AKT1 and PIM1.

The protein belongs to the IML1 family. In terms of assembly, within the GATOR complex, component of the GATOR1 subcomplex, made of DEPDC5, NPRL2 and NPRL3. GATOR1 mediates the strong interaction of the GATOR complex with small GTPases Rag (RagA/RRAGA, RagB/RRAGB, RagC/RRAGC and/or RagD/RRAGD) heterodimers. Interacts with SAMTOR; interaction is direct and takes place in presence of methionine, leading to inhibit the activity of the GATOR1 complex. Post-translationally, phosphorylation at Ser-1002 and Ser-1530 by AKT1 and PIM1 inhibit the activity of DEPDC5, releasing inhibition of the mTORC1 pathway. In terms of processing, ubiquitinated. Amino acid-induced 'Lys-48'-linked polyubiquitination of DEPDC5 by the BCR(KLHL22) ubiquitin ligase complex leads to DEPDC5 proteasomal degradation and inhibition of the GATOR1 complex. Ubiquitination may occur at multiple lysines. In terms of tissue distribution, expressed in developing and adult brain.

It localises to the lysosome membrane. The protein resides in the cytoplasm. It is found in the cytosol. Its subcellular location is the perinuclear region. Functionally, as a component of the GATOR1 complex functions as an inhibitor of the amino acid-sensing branch of the mTORC1 pathway. In response to amino acid depletion, the GATOR1 complex has GTPase activating protein (GAP) activity and strongly increases GTP hydrolysis by RagA/RRAGA (or RagB/RRAGB) within heterodimeric Rag complexes, thereby turning them into their inactive GDP-bound form, releasing mTORC1 from lysosomal surface and inhibiting mTORC1 signaling. In the presence of abundant amino acids, the GATOR1 complex is negatively regulated by GATOR2, the other GATOR subcomplex, in this amino acid-sensing branch of the TORC1 pathway. Within the GATOR1 complex, DEPDC5 mediates direct interaction with the nucleotide-binding pocket of small GTPases Rag (RagA/RRAGA, RagB/RRAGB, RagC/RRAGC and/or RagD/RRAGD) and coordinates their nucleotide loading states by promoting RagA/RRAGA or RagB/RRAGB into their GDP-binding state and RagC/RRAGC or RagD/RRAGD into their GTP-binding state. However, it does not execute the GAP activity, which is mediated by NPRL2. The protein is GATOR1 complex protein DEPDC5 of Homo sapiens (Human).